A 467-amino-acid polypeptide reads, in one-letter code: MTTGKIVQIIGAVVDVEFPQGSVPRVYDALNVVDAKERLVLEVQQQIGGGVVRAIVMGSSDGLRRGLTVENTGAPITVPVGTKTLGRIMNVLGDAIDECGEIGAEEHYSIHRAAPSYEEQANSTELLETGVKVIDLICPFAKGGKIGLFGGAGVGKTVNMMELINNIALQHSGLSVFAGVGERTREGNDFYFEMQEAGVVNIEHPEESKVAMVYGQMNEPPGNRLRVALTGLTMAERFRDEGRDVLLFIDNIYRYTLAGTEVSALLGRMPSAVGYQPTLAEEMGVLQERITSTRSGSITSVQAVYVPADDLTDPSPATTFAHLDATVVLNRNIASMGLYPAIDPLDSTSRQLDPLVVGQEHYDIARNVQSTLQRYKELKDIIAILGMDELSEEDKQVVSRARKIEKFLTQPYHVAEVFTGDPGIYVSLKDTLAGFKGLLAGDYDDVPEQAFMYCGRIEDALENAKKL.

150-157 (GGAGVGKT) lines the ATP pocket.

This sequence belongs to the ATPase alpha/beta chains family. As to quaternary structure, F-type ATPases have 2 components, CF(1) - the catalytic core - and CF(0) - the membrane proton channel. CF(1) has five subunits: alpha(3), beta(3), gamma(1), delta(1), epsilon(1). CF(0) has three main subunits: a(1), b(2) and c(9-12). The alpha and beta chains form an alternating ring which encloses part of the gamma chain. CF(1) is attached to CF(0) by a central stalk formed by the gamma and epsilon chains, while a peripheral stalk is formed by the delta and b chains.

The protein resides in the cell inner membrane. It catalyses the reaction ATP + H2O + 4 H(+)(in) = ADP + phosphate + 5 H(+)(out). Functionally, produces ATP from ADP in the presence of a proton gradient across the membrane. The catalytic sites are hosted primarily by the beta subunits. The polypeptide is ATP synthase subunit beta (Aliivibrio salmonicida (strain LFI1238) (Vibrio salmonicida (strain LFI1238))).